Consider the following 114-residue polypeptide: Iron-sulfur cluster insertion protein ErpA (114 aa).

The iron-sulfur cluster site is built by cysteine 42, cysteine 106, and cysteine 108.

Belongs to the HesB/IscA family. In terms of assembly, homodimer. Iron-sulfur cluster is required as a cofactor.

Functionally, required for insertion of 4Fe-4S clusters for at least IspG. This Haemophilus ducreyi (strain 35000HP / ATCC 700724) protein is Iron-sulfur cluster insertion protein ErpA.